The following is a 274-amino-acid chain: Proteasome subunit beta (274 aa).

A propeptide spans 1–52 (MADPLGAAGRLPAVFMTPGTSSFADFLSRSAPHLLPGARSGLPGPVTEVAHG) (removed in mature form; by autocatalysis). The active-site Nucleophile is threonine 53.

This sequence belongs to the peptidase T1B family. The 20S proteasome core is composed of 14 alpha and 14 beta subunits that assemble into four stacked heptameric rings, resulting in a barrel-shaped structure. The two inner rings, each composed of seven catalytic beta subunits, are sandwiched by two outer rings, each composed of seven alpha subunits. The catalytic chamber with the active sites is on the inside of the barrel. Has a gated structure, the ends of the cylinder being occluded by the N-termini of the alpha-subunits. Is capped by the proteasome-associated ATPase, ARC.

The protein localises to the cytoplasm. It catalyses the reaction Cleavage of peptide bonds with very broad specificity.. It functions in the pathway protein degradation; proteasomal Pup-dependent pathway. Its activity is regulated as follows. The formation of the proteasomal ATPase ARC-20S proteasome complex, likely via the docking of the C-termini of ARC into the intersubunit pockets in the alpha-rings, may trigger opening of the gate for substrate entry. Interconversion between the open-gate and close-gate conformations leads to a dynamic regulation of the 20S proteasome proteolysis activity. Functionally, component of the proteasome core, a large protease complex with broad specificity involved in protein degradation. In Frankia casuarinae (strain DSM 45818 / CECT 9043 / HFP020203 / CcI3), this protein is Proteasome subunit beta.